The sequence spans 220 residues: Octanoyltransferase (220 aa).

The BPL/LPL catalytic domain maps to 31 to 217 (ENTPDEIWLV…HFAEILGYNA (187 aa)). Residues 70-77 (RGGQITYH), 146-148 (SLG), and 159-161 (GLA) each bind substrate. Residue Cys-177 is the Acyl-thioester intermediate of the active site.

It belongs to the LipB family.

Its subcellular location is the cytoplasm. It carries out the reaction octanoyl-[ACP] + L-lysyl-[protein] = N(6)-octanoyl-L-lysyl-[protein] + holo-[ACP] + H(+). It participates in protein modification; protein lipoylation via endogenous pathway; protein N(6)-(lipoyl)lysine from octanoyl-[acyl-carrier-protein]: step 1/2. In terms of biological role, catalyzes the transfer of endogenously produced octanoic acid from octanoyl-acyl-carrier-protein onto the lipoyl domains of lipoate-dependent enzymes. Lipoyl-ACP can also act as a substrate although octanoyl-ACP is likely to be the physiological substrate. This chain is Octanoyltransferase, found in Actinobacillus succinogenes (strain ATCC 55618 / DSM 22257 / CCUG 43843 / 130Z).